A 253-amino-acid polypeptide reads, in one-letter code: 5'/3'-nucleotidase SurE (253 aa).

D8, D9, S39, and N92 together coordinate a divalent metal cation.

It belongs to the SurE nucleotidase family. The cofactor is a divalent metal cation.

Its subcellular location is the cytoplasm. It catalyses the reaction a ribonucleoside 5'-phosphate + H2O = a ribonucleoside + phosphate. The catalysed reaction is a ribonucleoside 3'-phosphate + H2O = a ribonucleoside + phosphate. The enzyme catalyses [phosphate](n) + H2O = [phosphate](n-1) + phosphate + H(+). Nucleotidase with a broad substrate specificity as it can dephosphorylate various ribo- and deoxyribonucleoside 5'-monophosphates and ribonucleoside 3'-monophosphates with highest affinity to 3'-AMP. Also hydrolyzes polyphosphate (exopolyphosphatase activity) with the preference for short-chain-length substrates (P20-25). Might be involved in the regulation of dNTP and NTP pools, and in the turnover of 3'-mononucleotides produced by numerous intracellular RNases (T1, T2, and F) during the degradation of various RNAs. The sequence is that of 5'/3'-nucleotidase SurE from Shigella flexneri serotype 5b (strain 8401).